The sequence spans 519 residues: ATP synthase subunit alpha (519 aa).

ATP is bound at residue 174 to 181 (GDRQTGKT).

This sequence belongs to the ATPase alpha/beta chains family. F-type ATPases have 2 components, CF(1) - the catalytic core - and CF(0) - the membrane proton channel. CF(1) has five subunits: alpha(3), beta(3), gamma(1), delta(1), epsilon(1). CF(0) has three main subunits: a(1), b(2) and c(9-12). The alpha and beta chains form an alternating ring which encloses part of the gamma chain. CF(1) is attached to CF(0) by a central stalk formed by the gamma and epsilon chains, while a peripheral stalk is formed by the delta and b chains.

It localises to the cell inner membrane. The catalysed reaction is ATP + H2O + 4 H(+)(in) = ADP + phosphate + 5 H(+)(out). Its function is as follows. Produces ATP from ADP in the presence of a proton gradient across the membrane. The alpha chain is a regulatory subunit. This is ATP synthase subunit alpha from Acidovorax ebreus (strain TPSY) (Diaphorobacter sp. (strain TPSY)).